Consider the following 442-residue polypeptide: Putative nucleotide-sugar transporter YMD8 (442 aa).

Residues 1–3 (MNR) lie on the Cytoplasmic side of the membrane. The chain crosses the membrane as a helical span at residues 4-24 (TVFLAFVFGWYFCSIALSIYN). The Extracellular segment spans residues 25 to 32 (RWMFDPKD). Residues 33-53 (GLGIGYPVLVTTFHQATLWLL) form a helical membrane-spanning segment. Residues 54–76 (SGIYIKLRHKPVKNVLRKNNGFN) are Cytoplasmic-facing. A helical membrane pass occupies residues 77–97 (WSFFLKFLLPTAVASAGDIGL). The Extracellular portion of the chain corresponds to 98–107 (SNVSFQYVPL). Residue asparagine 99 is glycosylated (N-linked (GlcNAc...) asparagine). The helical transmembrane segment at 108–128 (TIYTIIKSSSIAFVLLFGCIF) threads the bilayer. The Cytoplasmic segment spans residues 129–132 (KLEK). Residues 133–153 (FHWKLALSVIIMFVGVALMVF) form a helical membrane-spanning segment. Over 154–166 (KPSDSTSTKNDQA) the chain is Extracellular. A helical transmembrane segment spans residues 167–187 (LVIFGSFLVLASSCLSGLRWV). Over 188–254 (YTQLMLRNNP…PIHTIHQLAP (67 aa)) the chain is Cytoplasmic. The residue at position 209 (serine 209) is a Phosphoserine. The helical transmembrane segment at 255-275 (IMGITLLLTSLLVEKPFPGIF) threads the bilayer. The Extracellular segment spans residues 276-301 (SSSIFRLDTSNGGVGTETTVLSIVRG). The helical transmembrane segment at 302–322 (IVLLILPGFAVFLLTICEFSI) threads the bilayer. The Cytoplasmic segment spans residues 323–329 (LEQTPVL). A helical transmembrane segment spans residues 330 to 350 (TVSIVGIVKELLTVIFGIIIL). Over 351-355 (SERLS) the chain is Extracellular. The helical transmembrane segment at 356–376 (GFYNWLGMLIIMADVCYYNYF) threads the bilayer. Residues 377–442 (RYKQDLLQKY…QNVSRSSQQV (66 aa)) lie on the Cytoplasmic side of the membrane.

This sequence belongs to the TPT transporter family. SLC35C subfamily.

It is found in the golgi apparatus membrane. The protein resides in the cytoplasmic vesicle. The protein localises to the COPI-coated vesicle membrane. This chain is Putative nucleotide-sugar transporter YMD8 (YMD8), found in Saccharomyces cerevisiae (strain ATCC 204508 / S288c) (Baker's yeast).